Here is a 251-residue protein sequence, read N- to C-terminus: Adapter protein MecA (251 aa).

This sequence belongs to the MecA family. In terms of assembly, homodimer.

Functionally, enables the recognition and targeting of unfolded and aggregated proteins to the ClpC protease or to other proteins involved in proteolysis. This is Adapter protein MecA from Streptococcus agalactiae serotype III (strain NEM316).